The primary structure comprises 199 residues: MVKSQNITWHDSEVTKNERQEKNGHKSVVLWFTGLSGSGKSTISVALEKALFERGVRSYRLDGDNIRHGLNNNLGFSPEDRKENIRRIGEVSKLLSDAGLITLTAFISPYREDRDHVREILEDGEFVEVYTKASVAACEERDPKQLYKKVRAGEIKNFTGIDAPYEAPEDPEIIVDTEENSVEEAVEQIIQYLEDQKVI.

Gly-34 to Ser-41 is a binding site for ATP. Ser-108 (phosphoserine intermediate) is an active-site residue.

This sequence belongs to the APS kinase family.

It catalyses the reaction adenosine 5'-phosphosulfate + ATP = 3'-phosphoadenylyl sulfate + ADP + H(+). Its pathway is sulfur metabolism; hydrogen sulfide biosynthesis; sulfite from sulfate: step 2/3. Its function is as follows. Catalyzes the synthesis of activated sulfate. The polypeptide is Adenylyl-sulfate kinase (Staphylococcus carnosus (strain TM300)).